The chain runs to 220 residues: Type-4 uracil-DNA glycosylase (220 aa).

2 residues coordinate [4Fe-4S] cluster: cysteine 14 and cysteine 17. Uracil is bound by residues 41–43 (GEA), phenylalanine 55, and asparagine 82. [4Fe-4S] cluster is bound by residues cysteine 86 and cysteine 102. Histidine 164 serves as a coordination point for uracil.

This sequence belongs to the uracil-DNA glycosylase (UDG) superfamily. Type 4 (UDGa) family.

It carries out the reaction Hydrolyzes single-stranded DNA or mismatched double-stranded DNA and polynucleotides, releasing free uracil.. In terms of biological role, removes uracil bases that are present in DNA as a result of either deamination of cytosine or misincorporation of dUMP instead of dTMP. The chain is Type-4 uracil-DNA glycosylase from Sulfurisphaera tokodaii (strain DSM 16993 / JCM 10545 / NBRC 100140 / 7) (Sulfolobus tokodaii).